The following is a 129-amino-acid chain: MAPKNNAKGGDKKGKGKDASEGDKGKGGGKGLKPATSINVRHILCEKFSKKEEALEKLRNGAKFDDVAREYSEDKARQGGSLGWKVRGSLNADFEKAAYELEPSTTANPKYVEVKTGFGYHIIMVEGRK.

A disordered region spans residues 1–34; the sequence is MAPKNNAKGGDKKGKGKDASEGDKGKGGGKGLKP. Residues 9–26 show a composition bias toward basic and acidic residues; the sequence is GGDKKGKGKDASEGDKGK. A PpiC domain is found at 35 to 127; sequence ATSINVRHIL…FGYHIIMVEG (93 aa).

The protein belongs to the PpiC/parvulin rotamase family. PIN4 subfamily.

The enzyme catalyses [protein]-peptidylproline (omega=180) = [protein]-peptidylproline (omega=0). Functionally, PPIases accelerate the folding of proteins. It catalyzes the cis-trans isomerization of proline imidic peptide bonds in oligopeptides. This chain is Peptidyl-prolyl cis-trans isomerase pin4 (pin4), found in Aspergillus fumigatus (strain ATCC MYA-4609 / CBS 101355 / FGSC A1100 / Af293) (Neosartorya fumigata).